Here is a 158-residue protein sequence, read N- to C-terminus: Acireductone dioxygenase (158 aa).

Fe(2+) contacts are provided by His81, His83, Glu87, and His126. His81, His83, Glu87, and His126 together coordinate Ni(2+).

Belongs to the acireductone dioxygenase (ARD) family. The cofactor is Fe(2+). Ni(2+) is required as a cofactor.

The protein localises to the cytoplasm. The protein resides in the nucleus. It carries out the reaction 1,2-dihydroxy-5-(methylsulfanyl)pent-1-en-3-one + O2 = 4-methylsulfanyl-2-oxobutanoate + formate + 2 H(+). The catalysed reaction is 1,2-dihydroxy-5-(methylsulfanyl)pent-1-en-3-one + O2 = 3-(methylsulfanyl)propanoate + CO + formate + 2 H(+). Its pathway is amino-acid biosynthesis; L-methionine biosynthesis via salvage pathway; L-methionine from S-methyl-5-thio-alpha-D-ribose 1-phosphate: step 5/6. Functionally, catalyzes 2 different reactions between oxygen and the acireductone 1,2-dihydroxy-3-keto-5-methylthiopentene (DHK-MTPene) depending upon the metal bound in the active site. Fe-containing acireductone dioxygenase (Fe-ARD) produces formate and 2-keto-4-methylthiobutyrate (KMTB), the alpha-ketoacid precursor of methionine in the methionine recycle pathway. Ni-containing acireductone dioxygenase (Ni-ARD) produces methylthiopropionate, carbon monoxide and formate, and does not lie on the methionine recycle pathway. In Metarhizium robertsii (strain ARSEF 23 / ATCC MYA-3075) (Metarhizium anisopliae (strain ARSEF 23)), this protein is Acireductone dioxygenase.